A 230-amino-acid chain; its full sequence is Thiamine-triphosphatase (230 aa).

Ala2 carries the N-acetylalanine modification. The 197-residue stretch at 5 to 201 folds into the CYTH domain; the sequence is LIEVERKFLP…AKLIVYLQRF (197 aa). The Mg(2+) site is built by Glu7 and Glu9. Lys11, Arg55, Arg57, Lys65, and Arg125 together coordinate substrate. Residues Asp145, Glu157, and Glu159 each coordinate Mg(2+). Residue Glu157 participates in substrate binding. Substrate is bound at residue Lys193.

Belongs to the ThTPase family. Monomer. Mg(2+) is required as a cofactor. As to expression, widely expressed but at a low level.

Its subcellular location is the cytoplasm. The catalysed reaction is thiamine triphosphate + H2O = thiamine diphosphate + phosphate + H(+). Its function is as follows. Hydrolase highly specific for thiamine triphosphate (ThTP). This is Thiamine-triphosphatase (THTPA) from Homo sapiens (Human).